Consider the following 134-residue polypeptide: Putative thioredoxin 2 (134 aa).

The 104-residue stretch at 3-106 folds into the Thioredoxin domain; that stretch reads STVELTKENF…LTDVIGQARK (104 aa). Cysteine 31 and cysteine 34 form a disulfide bridge. The interval 115–134 is disordered; the sequence is AVAEQQAQAGQNGQEGQEGQ. Low complexity predominate over residues 117–134; the sequence is AEQQAQAGQNGQEGQEGQ.

This sequence belongs to the thioredoxin family.

The protein localises to the cytoplasm. Component of the thioredoxin-thioredoxin reductase system. Participates in various redox reactions through the reversible oxidation of its active center dithiol to a disulfide and catalyzes dithiol-disulfide exchange reactions. The polypeptide is Putative thioredoxin 2 (trxC) (Streptomyces coelicolor (strain ATCC BAA-471 / A3(2) / M145)).